The chain runs to 186 residues: Intraflagellar transport protein 27 homolog (186 aa).

Residues 12–19 (GDPTVGKT), 64–68 (DSAGK), and 123–126 (NKTD) contribute to the GTP site.

The protein belongs to the small GTPase superfamily. Rab family. As to quaternary structure, component of the IFT complex B, at least composed of IFT20, IFT22, IFT25, IFT27, IFT46, IFT52, TRAF3IP1/IFT54, IFT57, IFT74, IFT80, IFT81, and IFT88. Interacts with IFT25. Interacts with IFT70B. Interacts with RABL2/RABL2A; binding is equal in the presence of GTP or GDP. Interacts with IFT88. Interacts with ARL6; recognizes and binds with the GTP-free form of ARL6.

Its subcellular location is the cell projection. The protein resides in the cilium. It localises to the cytoplasm. The protein localises to the flagellum. Functionally, small GTPase-like component of the intraflagellar transport (IFT) complex B that promotes the exit of the BBSome complex from cilia via its interaction with ARL6. Not involved in entry of the BBSome complex into cilium. Prevents aggregation of GTP-free ARL6. Required for hedgehog signaling. Forms a subcomplex within the IFT complex B with IFT25. Its role in intraflagellar transport is mainly seen in tissues rich in ciliated cells such as kidney and testis. Essential for male fertility, spermiogenesis and sperm flagella formation. Plays a role in the early development of the kidney. May be involved in the regulation of ureteric bud initiation. The protein is Intraflagellar transport protein 27 homolog (IFT27) of Bos taurus (Bovine).